Consider the following 163-residue polypeptide: NADH-quinone oxidoreductase subunit I (163 aa).

2 consecutive 4Fe-4S ferredoxin-type domains span residues 53-83 (LRRY…IEAG) and 94-123 (VRYD…EGPN). [4Fe-4S] cluster contacts are provided by C63, C66, C69, C73, C103, C106, C109, and C113.

Belongs to the complex I 23 kDa subunit family. As to quaternary structure, NDH-1 is composed of 14 different subunits. Subunits NuoA, H, J, K, L, M, N constitute the membrane sector of the complex. Requires [4Fe-4S] cluster as cofactor.

Its subcellular location is the cell inner membrane. The catalysed reaction is a quinone + NADH + 5 H(+)(in) = a quinol + NAD(+) + 4 H(+)(out). NDH-1 shuttles electrons from NADH, via FMN and iron-sulfur (Fe-S) centers, to quinones in the respiratory chain. The immediate electron acceptor for the enzyme in this species is believed to be ubiquinone. Couples the redox reaction to proton translocation (for every two electrons transferred, four hydrogen ions are translocated across the cytoplasmic membrane), and thus conserves the redox energy in a proton gradient. The sequence is that of NADH-quinone oxidoreductase subunit I from Rhizobium johnstonii (strain DSM 114642 / LMG 32736 / 3841) (Rhizobium leguminosarum bv. viciae).